Here is a 168-residue protein sequence, read N- to C-terminus: Transcriptional regulator MraZ (168 aa).

SpoVT-AbrB domains lie at 8-51 (EYNQ…GGDR) and 90-140 (ALNM…KADI).

It belongs to the MraZ family. Forms oligomers.

It localises to the cytoplasm. The protein localises to the nucleoid. The protein is Transcriptional regulator MraZ of Cereibacter sphaeroides (strain KD131 / KCTC 12085) (Rhodobacter sphaeroides).